A 141-amino-acid chain; its full sequence is Large ribosomal subunit protein uL11 (141 aa).

This sequence belongs to the universal ribosomal protein uL11 family. In terms of assembly, part of the ribosomal stalk of the 50S ribosomal subunit. Interacts with L10 and the large rRNA to form the base of the stalk. L10 forms an elongated spine to which L12 dimers bind in a sequential fashion forming a multimeric L10(L12)X complex. One or more lysine residues are methylated.

Functionally, forms part of the ribosomal stalk which helps the ribosome interact with GTP-bound translation factors. The protein is Large ribosomal subunit protein uL11 of Synechococcus sp. (strain JA-2-3B'a(2-13)) (Cyanobacteria bacterium Yellowstone B-Prime).